A 364-amino-acid chain; its full sequence is Coproporphyrin III ferrochelatase (364 aa).

The Fe-coproporphyrin III site is built by arginine 29 and tyrosine 118. Residues histidine 169 and glutamate 250 each contribute to the Fe(2+) site.

Belongs to the ferrochelatase family.

The protein localises to the cytoplasm. It carries out the reaction Fe-coproporphyrin III + 2 H(+) = coproporphyrin III + Fe(2+). It functions in the pathway porphyrin-containing compound metabolism; protoheme biosynthesis. Involved in coproporphyrin-dependent heme b biosynthesis. Catalyzes the insertion of ferrous iron into coproporphyrin III to form Fe-coproporphyrin III. This Streptococcus pneumoniae serotype 4 (strain ATCC BAA-334 / TIGR4) protein is Coproporphyrin III ferrochelatase.